We begin with the raw amino-acid sequence, 345 residues long: S-adenosylmethionine:tRNA ribosyltransferase-isomerase (345 aa).

Belongs to the QueA family. Monomer.

It is found in the cytoplasm. The catalysed reaction is 7-aminomethyl-7-carbaguanosine(34) in tRNA + S-adenosyl-L-methionine = epoxyqueuosine(34) in tRNA + adenine + L-methionine + 2 H(+). It participates in tRNA modification; tRNA-queuosine biosynthesis. Functionally, transfers and isomerizes the ribose moiety from AdoMet to the 7-aminomethyl group of 7-deazaguanine (preQ1-tRNA) to give epoxyqueuosine (oQ-tRNA). This Rhodospirillum rubrum (strain ATCC 11170 / ATH 1.1.1 / DSM 467 / LMG 4362 / NCIMB 8255 / S1) protein is S-adenosylmethionine:tRNA ribosyltransferase-isomerase.